The sequence spans 243 residues: Adenosylcobinamide-GDP ribazoletransferase (243 aa).

The next 5 helical transmembrane spans lie at 31 to 51 (LLWYPAVGLLLGLLLWLAHLL), 61 to 81 (AAIILALWVGLSGGLHLDGLA), 109 to 129 (IAVVVLVLLLLLKFAALLSLL), 134 to 154 (GIYLVLLPWLGRSLLPLLLAT), and 188 to 208 (LLLGWGALIALATALALFVWL).

The protein belongs to the CobS family. Mg(2+) is required as a cofactor.

Its subcellular location is the cell inner membrane. It carries out the reaction alpha-ribazole + adenosylcob(III)inamide-GDP = adenosylcob(III)alamin + GMP + H(+). It catalyses the reaction alpha-ribazole 5'-phosphate + adenosylcob(III)inamide-GDP = adenosylcob(III)alamin 5'-phosphate + GMP + H(+). It functions in the pathway cofactor biosynthesis; adenosylcobalamin biosynthesis; adenosylcobalamin from cob(II)yrinate a,c-diamide: step 7/7. In terms of biological role, joins adenosylcobinamide-GDP and alpha-ribazole to generate adenosylcobalamin (Ado-cobalamin). Also synthesizes adenosylcobalamin 5'-phosphate from adenosylcobinamide-GDP and alpha-ribazole 5'-phosphate. This chain is Adenosylcobinamide-GDP ribazoletransferase, found in Ectopseudomonas mendocina (strain ymp) (Pseudomonas mendocina).